The chain runs to 180 residues: Adenine phosphoribosyltransferase (180 aa).

It belongs to the purine/pyrimidine phosphoribosyltransferase family. Homodimer.

The protein resides in the cytoplasm. It carries out the reaction AMP + diphosphate = 5-phospho-alpha-D-ribose 1-diphosphate + adenine. The protein operates within purine metabolism; AMP biosynthesis via salvage pathway; AMP from adenine: step 1/1. Functionally, catalyzes a salvage reaction resulting in the formation of AMP, that is energically less costly than de novo synthesis. This is Adenine phosphoribosyltransferase from Mycobacterium avium (strain 104).